We begin with the raw amino-acid sequence, 747 residues long: Polyribonucleotide nucleotidyltransferase (747 aa).

2 residues coordinate Mg(2+): Asp487 and Asp493. Residues 554–613 enclose the KH domain; sequence PSTTTIKIDKDKIRDIIGPGGKIIKEICETSGAKIDISDDGTVSVYAADRDKLKIASDKI. The S1 motif domain occupies 623–691; that stretch reads GEIFNGTVTK…NKGKAKLTIK (69 aa). The tract at residues 694-716 is disordered; it reads DKDKSLNNPKPQNSINNAKENSE. Polar residues predominate over residues 699–712; the sequence is LNNPKPQNSINNAK.

The protein belongs to the polyribonucleotide nucleotidyltransferase family. Requires Mg(2+) as cofactor.

The protein resides in the cytoplasm. It carries out the reaction RNA(n+1) + phosphate = RNA(n) + a ribonucleoside 5'-diphosphate. Involved in mRNA degradation. Catalyzes the phosphorolysis of single-stranded polyribonucleotides processively in the 3'- to 5'-direction. In Rickettsia canadensis (strain McKiel), this protein is Polyribonucleotide nucleotidyltransferase.